A 113-amino-acid polypeptide reads, in one-letter code: uncharacterized protein (113 aa).

This is an uncharacterized protein from Methanocaldococcus jannaschii (strain ATCC 43067 / DSM 2661 / JAL-1 / JCM 10045 / NBRC 100440) (Methanococcus jannaschii).